The primary structure comprises 228 residues: Lipoprotein-releasing system ATP-binding protein LolD (228 aa).

The 222-residue stretch at 6–227 (LELLGIDRTY…LKDGKLIDYV (222 aa)) folds into the ABC transporter domain. Residue 42-49 (GPSGSGKS) coordinates ATP.

It belongs to the ABC transporter superfamily. Lipoprotein translocase (TC 3.A.1.125) family. In terms of assembly, the complex is composed of two ATP-binding proteins (LolD) and two transmembrane proteins (LolC and LolE).

It is found in the cell inner membrane. Its function is as follows. Part of the ABC transporter complex LolCDE involved in the translocation of mature outer membrane-directed lipoproteins, from the inner membrane to the periplasmic chaperone, LolA. Responsible for the formation of the LolA-lipoprotein complex in an ATP-dependent manner. In Hyphomonas neptunium (strain ATCC 15444), this protein is Lipoprotein-releasing system ATP-binding protein LolD.